The primary structure comprises 754 residues: 5-methyltetrahydropteroyltriglutamate--homocysteine methyltransferase (754 aa).

5-methyltetrahydropteroyltri-L-glutamate-binding positions include 17–20 and Lys117; that span reads RELK. L-homocysteine is bound by residues 431–433 and Glu484; that span reads IGS. L-methionine is bound by residues 431–433 and Glu484; that span reads IGS. Residues 515–516 and Trp561 each bind 5-methyltetrahydropteroyltri-L-glutamate; that span reads RC. Asp599 is a binding site for L-homocysteine. L-methionine is bound at residue Asp599. 5-methyltetrahydropteroyltri-L-glutamate is bound at residue Glu605. Zn(2+) contacts are provided by His641, Cys643, and Glu665. Residue His694 is the Proton donor of the active site. Cys726 serves as a coordination point for Zn(2+).

The protein belongs to the vitamin-B12 independent methionine synthase family. Requires Zn(2+) as cofactor.

It carries out the reaction 5-methyltetrahydropteroyltri-L-glutamate + L-homocysteine = tetrahydropteroyltri-L-glutamate + L-methionine. It participates in amino-acid biosynthesis; L-methionine biosynthesis via de novo pathway; L-methionine from L-homocysteine (MetE route): step 1/1. Functionally, catalyzes the transfer of a methyl group from 5-methyltetrahydrofolate to homocysteine resulting in methionine formation. This is 5-methyltetrahydropteroyltriglutamate--homocysteine methyltransferase from Salmonella typhi.